Reading from the N-terminus, the 463-residue chain is L-seryl-tRNA(Sec) selenium transferase (463 aa).

K295 carries the N6-(pyridoxal phosphate)lysine modification.

It belongs to the SelA family. Homodecamer; pentamer of dimers. Binds only one seryl-tRNA(Sec) per dimer. Requires pyridoxal 5'-phosphate as cofactor.

It is found in the cytoplasm. The catalysed reaction is L-seryl-tRNA(Sec) + selenophosphate + H(+) = L-selenocysteinyl-tRNA(Sec) + phosphate. It participates in aminoacyl-tRNA biosynthesis; selenocysteinyl-tRNA(Sec) biosynthesis; selenocysteinyl-tRNA(Sec) from L-seryl-tRNA(Sec) (bacterial route): step 1/1. Functionally, converts seryl-tRNA(Sec) to selenocysteinyl-tRNA(Sec) required for selenoprotein biosynthesis. The chain is L-seryl-tRNA(Sec) selenium transferase from Salmonella paratyphi A (strain AKU_12601).